Reading from the N-terminus, the 305-residue chain is MIRQRTLKEIVKTTGVGLHSGRKVTLTLRPAAANTGIIYRRTDLTPAVDFPADPASVRDTMLCTALVNDEGVRISTVEHLNAALAGMGIDNIIIEVDAPEIPIMDGSASPFVYLLQQAGIETQNAAKRFIRIKKPVRFEDGDKWAEFVPFNGFRMDFEIEFNHPAIDSDEQRLLFDFSTQGFVREISRARTFGFMRDIEYLQSQNLVLGGSFDNAIVLDDYRILNEEGLRFENEFVTHKVLDAIGDLYMCGHAIIGEFRAYKSGHGLNNQLLRAVLADQEAWEWTTFEEEVGSPVAFAEPNMVLA.

Positions 79, 238, and 242 each coordinate Zn(2+). The Proton donor role is filled by H265.

It belongs to the LpxC family. The cofactor is Zn(2+).

The catalysed reaction is a UDP-3-O-[(3R)-3-hydroxyacyl]-N-acetyl-alpha-D-glucosamine + H2O = a UDP-3-O-[(3R)-3-hydroxyacyl]-alpha-D-glucosamine + acetate. It functions in the pathway glycolipid biosynthesis; lipid IV(A) biosynthesis; lipid IV(A) from (3R)-3-hydroxytetradecanoyl-[acyl-carrier-protein] and UDP-N-acetyl-alpha-D-glucosamine: step 2/6. Functionally, catalyzes the hydrolysis of UDP-3-O-myristoyl-N-acetylglucosamine to form UDP-3-O-myristoylglucosamine and acetate, the committed step in lipid A biosynthesis. This chain is UDP-3-O-acyl-N-acetylglucosamine deacetylase, found in Vibrio vulnificus (strain CMCP6).